Reading from the N-terminus, the 750-residue chain is 5-methyltetrahydropteroyltriglutamate--homocysteine methyltransferase (750 aa).

Residues 15–18 (RELK) and Lys-114 contribute to the 5-methyltetrahydropteroyltri-L-glutamate site. L-homocysteine-binding positions include 425-427 (IGS) and Glu-478. L-methionine is bound by residues 425–427 (IGS) and Glu-478. Trp-555 lines the 5-methyltetrahydropteroyltri-L-glutamate pocket. Residue Asp-593 coordinates L-homocysteine. Asp-593 contacts L-methionine. Glu-599 contacts 5-methyltetrahydropteroyltri-L-glutamate. Residues His-636, Cys-638, and Glu-660 each coordinate Zn(2+). Catalysis depends on His-689, which acts as the Proton donor. Cys-721 contacts Zn(2+).

It belongs to the vitamin-B12 independent methionine synthase family. The cofactor is Zn(2+).

The catalysed reaction is 5-methyltetrahydropteroyltri-L-glutamate + L-homocysteine = tetrahydropteroyltri-L-glutamate + L-methionine. Its pathway is amino-acid biosynthesis; L-methionine biosynthesis via de novo pathway; L-methionine from L-homocysteine (MetE route): step 1/1. Its function is as follows. Catalyzes the transfer of a methyl group from 5-methyltetrahydrofolate to homocysteine resulting in methionine formation. The sequence is that of 5-methyltetrahydropteroyltriglutamate--homocysteine methyltransferase from Streptococcus gordonii (strain Challis / ATCC 35105 / BCRC 15272 / CH1 / DL1 / V288).